We begin with the raw amino-acid sequence, 512 residues long: Glycerol kinase 2 (512 aa).

Position 18 (Thr-18) interacts with ADP. Residues Thr-18, Thr-19, and Ser-20 each coordinate ATP. Residue Thr-18 participates in sn-glycerol 3-phosphate binding. Residue Arg-22 participates in ADP binding. 4 residues coordinate sn-glycerol 3-phosphate: Arg-88, Glu-89, Tyr-140, and Asp-255. Glycerol-binding residues include Arg-88, Glu-89, Tyr-140, Asp-255, and Gln-256. ADP is bound by residues Thr-277 and Gly-321. Thr-277, Gly-321, Gln-325, and Gly-422 together coordinate ATP. Residues Gly-422 and Asn-426 each coordinate ADP.

The protein belongs to the FGGY kinase family.

It catalyses the reaction glycerol + ATP = sn-glycerol 3-phosphate + ADP + H(+). The protein operates within polyol metabolism; glycerol degradation via glycerol kinase pathway; sn-glycerol 3-phosphate from glycerol: step 1/1. With respect to regulation, inhibited by fructose 1,6-bisphosphate (FBP). Key enzyme in the regulation of glycerol uptake and metabolism. Catalyzes the phosphorylation of glycerol to yield sn-glycerol 3-phosphate. In Streptomyces coelicolor (strain ATCC BAA-471 / A3(2) / M145), this protein is Glycerol kinase 2.